The sequence spans 504 residues: D-alanine--D-alanyl carrier protein ligase (504 aa).

152–153 (TS) contacts ATP. Aspartate 197 is a D-alanine binding site. An ATP-binding site is contributed by 292 to 297 (NTYGPT). Valine 301 lines the D-alanine pocket. ATP is bound by residues aspartate 383, 394-397 (YNGR), and lysine 492. Lysine 492 provides a ligand contact to D-alanine.

The protein belongs to the ATP-dependent AMP-binding enzyme family. DltA subfamily.

It is found in the cytoplasm. The enzyme catalyses holo-[D-alanyl-carrier protein] + D-alanine + ATP = D-alanyl-[D-alanyl-carrier protein] + AMP + diphosphate. Its pathway is cell wall biogenesis; lipoteichoic acid biosynthesis. In terms of biological role, catalyzes the first step in the D-alanylation of lipoteichoic acid (LTA), the activation of D-alanine and its transfer onto the D-alanyl carrier protein (Dcp) DltC. In an ATP-dependent two-step reaction, forms a high energy D-alanyl-AMP intermediate, followed by transfer of the D-alanyl residue as a thiol ester to the phosphopantheinyl prosthetic group of the Dcp. D-alanylation of LTA plays an important role in modulating the properties of the cell wall in Gram-positive bacteria, influencing the net charge of the cell wall. The sequence is that of D-alanine--D-alanyl carrier protein ligase from Bacillus cereus (strain B4264).